Here is a 288-residue protein sequence, read N- to C-terminus: MAWRDRRGALRAILTGSACVRPASVYDAISIRIADDLGFPFGMFGGSVASLAILGDPDIALITLTELAEQVRRMSRAAALPVVVDADHGYGNALNVRRTVEELEAAGAAGLTIEDTLLPQAYGEAKPQLVSREEGLGKIKAALDARRDPNLVIIGRTGACSITSLDDAIERALAYQAAGVDALFFTGVKTRAQLEAISAATTLPIALGSPPAELGDFDHLAERRVRIAVQGHAPIAAATEAVFKTLSAIKDGAAPKALTGLASAELMDKVTRADVVAERGEHFLGVKR.

Serine 47 lines the substrate pocket. Mg(2+) is bound at residue aspartate 85. Substrate is bound by residues arginine 156 and histidine 232.

The protein belongs to the isocitrate lyase/PEP mutase superfamily. Oxaloacetate decarboxylase family. Homotetramer; dimer of dimers. Mg(2+) serves as cofactor.

It catalyses the reaction oxaloacetate + H(+) = pyruvate + CO2. Functionally, catalyzes the decarboxylation of oxaloacetate into pyruvate. Seems to play a role in maintaining cellular concentrations of bicarbonate and pyruvate. The sequence is that of Oxaloacetate decarboxylase from Rhodopseudomonas palustris (strain ATCC BAA-98 / CGA009).